The following is a 100-amino-acid chain: NADH-quinone oxidoreductase subunit K 2 (100 aa).

Helical transmembrane passes span 4 to 24 (LWWS…GVLL), 28 to 48 (ILIV…NFIA), and 60 to 80 (IFAI…LGIL).

It belongs to the complex I subunit 4L family. In terms of assembly, NDH-1 is composed of 14 different subunits. Subunits NuoA, H, J, K, L, M, N constitute the membrane sector of the complex.

It is found in the cell inner membrane. The catalysed reaction is a quinone + NADH + 5 H(+)(in) = a quinol + NAD(+) + 4 H(+)(out). Its function is as follows. NDH-1 shuttles electrons from NADH, via FMN and iron-sulfur (Fe-S) centers, to quinones in the respiratory chain. The immediate electron acceptor for the enzyme in this species is believed to be ubiquinone. Couples the redox reaction to proton translocation (for every two electrons transferred, four hydrogen ions are translocated across the cytoplasmic membrane), and thus conserves the redox energy in a proton gradient. The chain is NADH-quinone oxidoreductase subunit K 2 from Rhizobium meliloti (strain 1021) (Ensifer meliloti).